The primary structure comprises 257 residues: Transcription factor MYB3 (257 aa).

HTH myb-type domains are found at residues 9–61 (KAHM…MNYL) and 62–116 (RPDL…KRKL). DNA-binding regions (H-T-H motif) lie at residues 37–61 (WRSL…MNYL) and 89–112 (WSLI…NTHI). The short motif at 189 to 193 (LNLEL) is the Required for interaction with CPL1 element.

Interacts with CPL1. Expressed in roots, stems, leaves, flowers and siliques.

The protein resides in the nucleus. The sequence is that of Transcription factor MYB3 (MYB3) from Arabidopsis thaliana (Mouse-ear cress).